The chain runs to 238 residues: Ribonuclease PH (238 aa).

Phosphate is bound by residues Arg-86 and 124-126 (GTR).

This sequence belongs to the RNase PH family. As to quaternary structure, homohexameric ring arranged as a trimer of dimers.

The enzyme catalyses tRNA(n+1) + phosphate = tRNA(n) + a ribonucleoside 5'-diphosphate. Phosphorolytic 3'-5' exoribonuclease that plays an important role in tRNA 3'-end maturation. Removes nucleotide residues following the 3'-CCA terminus of tRNAs; can also add nucleotides to the ends of RNA molecules by using nucleoside diphosphates as substrates, but this may not be physiologically important. Probably plays a role in initiation of 16S rRNA degradation (leading to ribosome degradation) during starvation. This Solibacter usitatus (strain Ellin6076) protein is Ribonuclease PH.